The sequence spans 200 residues: LHFPL tetraspan subfamily member 7 protein (200 aa).

A run of 4 helical transmembrane segments spans residues 5–27, 68–88, 113–133, and 150–170; these read VWVA…PAWF, VSAV…IFLL, AATA…SPFI, and LGWG…LPII.

It belongs to the TMEM211 family.

It is found in the membrane. The protein is LHFPL tetraspan subfamily member 7 protein of Homo sapiens (Human).